The sequence spans 281 residues: MAMAKAGAPRVSAAQLVTLGLSLLCAVAGPAAAQNCGCQPNVCCSKFGYCGTTDEYCGDGCQSGPCRSGGGGSSGGGGANVASVVTGSFFNGIKSQAGSGCEGKNFYTRSAFLSAVKAYPGFAHGGSQVQGKREIAAFFAHATHETGHFCYISEINKSNAYCDPTKRQWPCAAGQKYYGRGPLQISWNYNYGPAGRAIGFDGLGDPGRVARDAVVAFKAALWFWMNSVHGVVPQGFGATTRAINGALECGGNNPAQMNARVGYYRQYCRQLGVDPGPNLTC.

The signal sequence occupies residues methionine 1 to alanine 33. The Chitin-binding type-1 domain occupies glutamine 34 to serine 68. Disulfide bonds link cysteine 36-cysteine 44, cysteine 38-cysteine 50, cysteine 43-cysteine 57, and cysteine 61-cysteine 66. Residues glycine 69–glycine 78 form a hinge region (Gly-rich) region. Residues alanine 79–cysteine 281 are catalytic. Cysteine 101 and cysteine 150 are disulfide-bonded. The active-site Proton donor is glutamate 145. Asparagine 156 is a glycosylation site (N-linked (GlcNAc...) asparagine). 2 disulfide bridges follow: cysteine 162-cysteine 171 and cysteine 249-cysteine 281. Asparagine 278 carries an N-linked (GlcNAc...) asparagine glycan.

It belongs to the glycosyl hydrolase 19 family. Chitinase class I subfamily.

It is found in the secreted. The catalysed reaction is Random endo-hydrolysis of N-acetyl-beta-D-glucosaminide (1-&gt;4)-beta-linkages in chitin and chitodextrins.. Defense against chitin-containing fungal pathogens. Its action is countered by fungal polyglycine hydrolases, that cleaves within its hinge region (Gly-rich) to disrupt chitin-binding. This is Endochitinase B from Zea mays (Maize).